The following is a 154-amino-acid chain: MHCPFCRHPDSRVVDSREADEGQAIRRRRSCPECGRRFTTVETAVLSVVKRSGVTEPFSREKVVRGVRRACQGRQVDNDALNLLAQQVEDAVRASGSAEIPSNEVGLAILGPLRDLDEVAYLRFASVYRSFSSAEDFAREIKELREHRESRDDA.

A zinc finger spans residues 3–34; that stretch reads CPFCRHPDSRVVDSREADEGQAIRRRRSCPEC. One can recognise an ATP-cone domain in the interval 46-136; that stretch reads LSVVKRSGVT…VYRSFSSAED (91 aa).

The protein belongs to the NrdR family. The cofactor is Zn(2+).

Functionally, negatively regulates transcription of bacterial ribonucleotide reductase nrd genes and operons by binding to NrdR-boxes. The chain is Transcriptional repressor NrdR from Rhodococcus jostii (strain RHA1).